We begin with the raw amino-acid sequence, 228 residues long: uncharacterized protein (228 aa).

2 disordered regions span residues 1–62 (MQRP…VGRF) and 160–228 (SPRP…LSGV). Low complexity predominate over residues 13 to 33 (AASTRAPPRPSAPQQGRRQPS). Positions 167-176 (RGQQVTQDGP) are enriched in polar residues.

This is an uncharacterized protein from Homo sapiens (Human).